The following is a 2392-amino-acid chain: Protein Ycf2 (2392 aa).

ATP is bound at residue 1658-1665 (GPTEIGKS).

This sequence belongs to the Ycf2 family.

The protein resides in the plastid. The protein localises to the chloroplast stroma. Functionally, probable ATPase of unknown function. Its presence in a non-photosynthetic plant (Epifagus virginiana) and experiments in tobacco indicate that it has an essential function which is probably not related to photosynthesis. In Anthoceros angustus (Hornwort), this protein is Protein Ycf2.